Reading from the N-terminus, the 122-residue chain is uncharacterized protein (122 aa).

This is an uncharacterized protein from Mycoplasma pneumoniae (strain ATCC 29342 / M129 / Subtype 1) (Mycoplasmoides pneumoniae).